Consider the following 163-residue polypeptide: Lipoprotein signal peptidase (163 aa).

3 helical membrane passes run F8–M28, F61–W81, and F93–Y113. Catalysis depends on residues D117 and D136. The chain crosses the membrane as a helical span at residues Y128–I148.

Belongs to the peptidase A8 family.

The protein localises to the cell inner membrane. It catalyses the reaction Release of signal peptides from bacterial membrane prolipoproteins. Hydrolyzes -Xaa-Yaa-Zaa-|-(S,diacylglyceryl)Cys-, in which Xaa is hydrophobic (preferably Leu), and Yaa (Ala or Ser) and Zaa (Gly or Ala) have small, neutral side chains.. Its pathway is protein modification; lipoprotein biosynthesis (signal peptide cleavage). Functionally, this protein specifically catalyzes the removal of signal peptides from prolipoproteins. This chain is Lipoprotein signal peptidase, found in Bartonella henselae (strain ATCC 49882 / DSM 28221 / CCUG 30454 / Houston 1) (Rochalimaea henselae).